We begin with the raw amino-acid sequence, 133 residues long: Peptide methionine sulfoxide reductase MsrB (133 aa).

Residues leucine 8–arginine 130 form the MsrB domain. Residues cysteine 47, cysteine 50, cysteine 96, and cysteine 99 each coordinate Zn(2+). Cysteine 119 acts as the Nucleophile in catalysis.

It belongs to the MsrB Met sulfoxide reductase family. Zn(2+) is required as a cofactor.

It carries out the reaction L-methionyl-[protein] + [thioredoxin]-disulfide + H2O = L-methionyl-(R)-S-oxide-[protein] + [thioredoxin]-dithiol. This Pseudomonas putida (strain W619) protein is Peptide methionine sulfoxide reductase MsrB.